A 940-amino-acid polypeptide reads, in one-letter code: Gamma-aminobutyric acid type B receptor subunit 2 (940 aa).

The N-terminal stretch at 1-40 is a signal peptide; it reads MASPPSSGQPRPPPPPPPPARLLLPLLLSLLLWLAPGAWG. Over 41-482 the chain is Extracellular; that stretch reads WTRGAPRPPP…LRKISLPLYS (442 aa). N-linked (GlcNAc...) asparagine glycosylation occurs at asparagine 89. Cystine bridges form between cysteine 107/cysteine 134, cysteine 236/cysteine 265, and cysteine 264/cysteine 301. N-linked (GlcNAc...) asparagine glycans are attached at residues asparagine 297, asparagine 388, asparagine 403, and asparagine 452. A helical membrane pass occupies residues 483-503; sequence ILSALTILGMIMASAFLFFNI. Residues 504–521 lie on the Cytoplasmic side of the membrane; sequence KNRNQKLIKMSSPYMNNL. A helical membrane pass occupies residues 522-542; the sequence is IILGGMLSYASIFLFGLDGSF. Topologically, residues 543 to 550 are extracellular; it reads VSEKTFET. A helical transmembrane segment spans residues 551–571; the sequence is LCTVRTWILTVGYTTAFGAMF. Over 572–596 the chain is Cytoplasmic; it reads AKTWRVHAIFKNVKMKKKIIKDQKL. Residues 597–617 traverse the membrane as a helical segment; the sequence is LVIVGGMLLIDLCILICWQAV. The Extracellular segment spans residues 618-653; the sequence is DPLRRTVERYSMEPDPAGRDISIRPLLEHCENTHMT. A helical membrane pass occupies residues 654-674; that stretch reads IWLGIVYAYKGLLMLFGCFLA. Residues 675 to 690 lie on the Cytoplasmic side of the membrane; it reads WETRNVSIPALNDSKY. The helical transmembrane segment at 691–711 threads the bilayer; that stretch reads IGMSVYNVGIMCIIGAAVSFL. Over 712–719 the chain is Extracellular; it reads TRDQPNVQ. A helical transmembrane segment spans residues 720–740; it reads FCIVALVIIFCSTITLCLVFV. The Cytoplasmic segment spans residues 741–940; the sequence is PKLITLRTNP…PSFRVMVSGL (200 aa). The tract at residues 762 to 789 is disordered; that stretch reads TQNQKKEDSKTSTSVTSVNQASTSRLEG. Residues 772 to 786 are compositionally biased toward polar residues; the sequence is TSTSVTSVNQASTSR. 2 positions are modified to phosphoserine: serine 775 and serine 778. The stretch at 780–818 forms a coiled coil; that stretch reads NQASTSRLEGLQSENHRLRMKITELDKDLEEVTMQLQDT. Residue threonine 818 is modified to Phosphothreonine. 6 positions are modified to phosphoserine: serine 883, serine 892, serine 912, serine 915, serine 919, and serine 923.

Belongs to the G-protein coupled receptor 3 family. GABA-B receptor subfamily. As to quaternary structure, heterodimer of GABBR1 and GABBR2. Homodimers may form, but are inactive. Interacts (via C-terminus) with ATF4 (via leucine zipper domain). Interacts with KCTD8, KCTD12 and KCTD16; this interaction determines the pharmacology and kinetics of the receptor response, the KCTD proteins markedly accelerating the GABA-B response, although to different extents. Highly expressed in areas of the brain including thalamic nuclei, the hippocampus, cerebellar Purkinje cells and the medial habenula, and moderately expressed in the cerebral cortex, certain anterioventral thalamic nuclei, dorsal medial hypothalamic nucleus and suprachiasmatic nuclei. Also weakly expressed in the testis.

Its subcellular location is the cell membrane. The protein resides in the postsynaptic cell membrane. The protein localises to the perikaryon. It is found in the cell projection. It localises to the dendrite. Component of a heterodimeric G-protein coupled receptor for GABA, formed by GABBR1 and GABBR2. Within the heterodimeric GABA receptor, only GABBR1 seems to bind agonists, while GABBR2 mediates coupling to G proteins. Ligand binding causes a conformation change that triggers signaling via guanine nucleotide-binding proteins (G proteins) and modulates the activity of down-stream effectors, such as adenylate cyclase. Signaling inhibits adenylate cyclase, stimulates phospholipase A2, activates potassium channels, inactivates voltage-dependent calcium-channels and modulates inositol phospholipid hydrolysis. Plays a critical role in the fine-tuning of inhibitory synaptic transmission. Pre-synaptic GABA receptor inhibits neurotransmitter release by down-regulating high-voltage activated calcium channels, whereas postsynaptic GABA receptor decreases neuronal excitability by activating a prominent inwardly rectifying potassium (Kir) conductance that underlies the late inhibitory postsynaptic potentials. Not only implicated in synaptic inhibition but also in hippocampal long-term potentiation, slow wave sleep, muscle relaxation and antinociception. This chain is Gamma-aminobutyric acid type B receptor subunit 2 (Gabbr2), found in Rattus norvegicus (Rat).